The following is a 296-amino-acid chain: Acetylglutamate kinase (296 aa).

Residues 69 to 70, R91, and N193 contribute to the substrate site; that span reads GG.

It belongs to the acetylglutamate kinase family. ArgB subfamily.

The protein resides in the cytoplasm. The catalysed reaction is N-acetyl-L-glutamate + ATP = N-acetyl-L-glutamyl 5-phosphate + ADP. It functions in the pathway amino-acid biosynthesis; L-arginine biosynthesis; N(2)-acetyl-L-ornithine from L-glutamate: step 2/4. In terms of biological role, catalyzes the ATP-dependent phosphorylation of N-acetyl-L-glutamate. The polypeptide is Acetylglutamate kinase (Paracidovorax citrulli (strain AAC00-1) (Acidovorax citrulli)).